Reading from the N-terminus, the 469-residue chain is Trigger factor (469 aa).

One can recognise a PPIase FKBP-type domain in the interval 162-243; the sequence is GDFVSIDLSA…VKSVKERELP (82 aa). The interval 438-469 is disordered; the sequence is GPSGEQAAEDSAEESTDAAEGEAAEDADDTDK. Acidic residues predominate over residues 444-469; that stretch reads AAEDSAEESTDAAEGEAAEDADDTDK.

The protein belongs to the FKBP-type PPIase family. Tig subfamily.

The protein localises to the cytoplasm. The enzyme catalyses [protein]-peptidylproline (omega=180) = [protein]-peptidylproline (omega=0). Its function is as follows. Involved in protein export. Acts as a chaperone by maintaining the newly synthesized protein in an open conformation. Functions as a peptidyl-prolyl cis-trans isomerase. The protein is Trigger factor of Mycolicibacterium smegmatis (strain ATCC 700084 / mc(2)155) (Mycobacterium smegmatis).